Reading from the N-terminus, the 500-residue chain is Metal transporter Nramp3.1 (500 aa).

The next 12 membrane-spanning stretches (helical) occupy residues 51–71, 79–99, 128–148, 160–180, 188–208, 234–254, 280–300, 322–342, 370–390, 401–421, 439–459, and 467–487; these read LWLF…PGNL, AIAG…GLLV, MILW…EVIG, VLPL…FLFL, LEAA…WMFA, AVGV…SALV, AALA…AKGF, YGGG…AAGQ, ALIT…VFDT, WLNM…LCLV, VSWL…LDFF, and VFTT…IYLI.

Belongs to the NRAMP (TC 2.A.55) family. In terms of tissue distribution, expressed in roots, stems, buds and leaves.

It localises to the golgi apparatus. It is found in the trans-Golgi network membrane. The enzyme catalyses Mn(2+)(in) = Mn(2+)(out). The catalysed reaction is Fe(2+)(in) = Fe(2+)(out). Divalent metal transporter. Can transport manganese (Mn) and iron (Fe). Involved in the control of cell-to-cell transport of manganese (Mn) between organs and tissues to monitor Mn homeostasis. This chain is Metal transporter Nramp3.1, found in Populus trichocarpa (Western balsam poplar).